The sequence spans 371 residues: GTPase Obg (371 aa).

Residues 1–159 (MKFLDQAKVY…KTIWLRLKLI (159 aa)) form the Obg domain. The region spanning 160–327 (ADAGLVGLPN…VLRALRDIIV (168 aa)) is the OBG-type G domain. GTP-binding positions include 166 to 173 (GLPNAGKS), 191 to 195 (FTTLH), 212 to 215 (DIPG), 279 to 282 (SQID), and 308 to 310 (SAI). 2 residues coordinate Mg(2+): serine 173 and threonine 193. The interval 337–371 (APMKALKVRHRDMQSSGNEGESEDNSDRDDEEQQG) is disordered. Residues 356 to 371 (GESEDNSDRDDEEQQG) are compositionally biased toward acidic residues.

This sequence belongs to the TRAFAC class OBG-HflX-like GTPase superfamily. OBG GTPase family. As to quaternary structure, monomer. Mg(2+) is required as a cofactor.

The protein localises to the cytoplasm. Functionally, an essential GTPase which binds GTP, GDP and possibly (p)ppGpp with moderate affinity, with high nucleotide exchange rates and a fairly low GTP hydrolysis rate. Plays a role in control of the cell cycle, stress response, ribosome biogenesis and in those bacteria that undergo differentiation, in morphogenesis control. This is GTPase Obg from Rhizobium rhizogenes (strain K84 / ATCC BAA-868) (Agrobacterium radiobacter).